The sequence spans 370 residues: Spermidine/putrescine import ATP-binding protein PotA (370 aa).

One can recognise an ABC transporter domain in the interval 6 to 236 (IELHQVTKRY…PINHFVADFI (231 aa)). 38-45 (GPSGCGKT) contributes to the ATP binding site.

Belongs to the ABC transporter superfamily. Spermidine/putrescine importer (TC 3.A.1.11.1) family. The complex is composed of two ATP-binding proteins (PotA), two transmembrane proteins (PotB and PotC) and a solute-binding protein (PotD).

It is found in the cell membrane. The enzyme catalyses ATP + H2O + polyamine-[polyamine-binding protein]Side 1 = ADP + phosphate + polyamineSide 2 + [polyamine-binding protein]Side 1.. Its function is as follows. Part of the ABC transporter complex PotABCD involved in spermidine/putrescine import. Responsible for energy coupling to the transport system. The protein is Spermidine/putrescine import ATP-binding protein PotA of Levilactobacillus brevis (strain ATCC 367 / BCRC 12310 / CIP 105137 / JCM 1170 / LMG 11437 / NCIMB 947 / NCTC 947) (Lactobacillus brevis).